The primary structure comprises 509 residues: Photosystem II CP47 reaction center protein (509 aa).

A run of 6 helical transmembrane segments spans residues Ala-21–Ser-36, Ile-101–Trp-115, Gly-140–Phe-156, Ile-203–Thr-218, Val-237–Thr-252, and Asn-457–Arg-472.

It belongs to the PsbB/PsbC family. PsbB subfamily. In terms of assembly, PSII is composed of 1 copy each of membrane proteins PsbA, PsbB, PsbC, PsbD, PsbE, PsbF, PsbH, PsbI, PsbJ, PsbK, PsbL, PsbM, PsbT, PsbX, PsbY, PsbZ, Psb30/Ycf12, at least 3 peripheral proteins of the oxygen-evolving complex and a large number of cofactors. It forms dimeric complexes. The cofactor is Binds multiple chlorophylls. PSII binds additional chlorophylls, carotenoids and specific lipids..

It is found in the plastid. The protein localises to the chloroplast thylakoid membrane. In terms of biological role, one of the components of the core complex of photosystem II (PSII). It binds chlorophyll and helps catalyze the primary light-induced photochemical processes of PSII. PSII is a light-driven water:plastoquinone oxidoreductase, using light energy to abstract electrons from H(2)O, generating O(2) and a proton gradient subsequently used for ATP formation. The polypeptide is Photosystem II CP47 reaction center protein (Trieres chinensis (Marine centric diatom)).